A 337-amino-acid chain; its full sequence is UDP-3-O-acylglucosamine N-acyltransferase 1 (337 aa).

His238 functions as the Proton acceptor in the catalytic mechanism.

The protein belongs to the transferase hexapeptide repeat family. LpxD subfamily. Homotrimer.

It carries out the reaction a UDP-3-O-[(3R)-3-hydroxyacyl]-alpha-D-glucosamine + a (3R)-hydroxyacyl-[ACP] = a UDP-2-N,3-O-bis[(3R)-3-hydroxyacyl]-alpha-D-glucosamine + holo-[ACP] + H(+). It participates in bacterial outer membrane biogenesis; LPS lipid A biosynthesis. In terms of biological role, catalyzes the N-acylation of UDP-3-O-acylglucosamine using 3-hydroxyacyl-ACP as the acyl donor. Is involved in the biosynthesis of lipid A, a phosphorylated glycolipid that anchors the lipopolysaccharide to the outer membrane of the cell. This is UDP-3-O-acylglucosamine N-acyltransferase 1 from Koribacter versatilis (strain Ellin345).